The following is a 504-amino-acid chain: MFLFSSRRITSLRSYTIIKHSSCYSTLVSDGNIFSIQHFQSLMQKYESNLKIIHQLHSHFTTSGFLLLHQKQNSGKLFLFNPLLRCYSLGETPLHAYFLYDQLQRLHFLSDHNKSLPPFDSFTYLFLLKASSNPRFPSLLLGIGLHGLTLKLGFESHVYVQTALVGMYLVGGNMIDAHKVFDEMPERNPVTWNVMITGLTNLGDFEKALCFLEKMPNRTVVSWTTIIDGYARVDKPKEAILLFSRMVACDAIKPNEITILAILPAVWNLGDLKMCGSVHAYVGKRGFVPCDIRVTNSLIDAYAKCGCIQSAFKFFIEIPNGRKNLVSWTTMISAFAIHGMGKEAVSMFKDMERLGLKPNRVTMISVLNACSHGGLAEEEFLEFFNTMVNEYKITPDVKHYGCLVDMLRRKGRLEEAEKIALEIPIEEKAVVWRMLLGACSVYDDAELAERVTRKLMELERSHGGDYVLMSNIFCGTGRFLDAQRFRKQMDVRGVAKLPGHSQVT.

Residues 1–87 (MFLFSSRRIT…FLFNPLLRCY (87 aa)) constitute a mitochondrion transit peptide. 10 PPR repeats span residues 76–110 (KLFLFNPLLRCYSLGETPLHAYFLYDQLQRLHFLS), 120–156 (DSFTYLFLLKASSNPRFPSLLLGIGLHGLTLKLGFES), 157–187 (HVYVQTALVGMYLVGGNMIDAHKVFDEMPER), 188–222 (NPVTWNVMITGLTNLGDFEKALCFLEKMPNRTVVS), 223–253 (WTTIIDGYARVDKPKEAILLFSRMVACDAIK), 255–289 (NEITILAILPAVWNLGDLKMCGSVHAYVGKRGFVP), 291–321 (DIRVTNSLIDAYAKCGCIQSAFKFFIEIPNG), 324–358 (NLVSWTTMISAFAIHGMGKEAVSMFKDMERLGLKP), 359–390 (NRVTMISVLNACSHGGLAEEEFLEFFNTMVNE), and 396–430 (DVKHYGCLVDMLRRKGRLEEAEKIALEIPIEEKAV). Residues 431-504 (VWRMLLGACS…AKLPGHSQVT (74 aa)) form a type E motif; degenerate region.

This sequence belongs to the PPR family. PCMP-E subfamily.

The protein localises to the mitochondrion. This Arabidopsis thaliana (Mouse-ear cress) protein is Pentatricopeptide repeat-containing protein At1g09220, mitochondrial (PCMP-E25).